Reading from the N-terminus, the 181-residue chain is Adenylate kinase (181 aa).

Position 10 to 15 (10 to 15 (GAGKGT)) interacts with ATP. The segment at 30–59 (STGELFRKNIQDGTKLGIEAKRYLDAGDLV) is NMP. Residues T31, R36, 57-59 (DLV), 85-88 (GYPR), and Q92 contribute to the AMP site. Residues 126–132 (GRGRADD) form an LID region. R127 is a binding site for ATP. Positions 129 and 140 each coordinate AMP. G166 is a binding site for ATP.

Belongs to the adenylate kinase family. In terms of assembly, monomer.

It is found in the cytoplasm. It catalyses the reaction AMP + ATP = 2 ADP. Its pathway is purine metabolism; AMP biosynthesis via salvage pathway; AMP from ADP: step 1/1. Catalyzes the reversible transfer of the terminal phosphate group between ATP and AMP. Plays an important role in cellular energy homeostasis and in adenine nucleotide metabolism. The sequence is that of Adenylate kinase from Mycobacterium marinum (strain ATCC BAA-535 / M).